The chain runs to 234 residues: Phosphoribosylaminoimidazole-succinocarboxamide synthase (234 aa).

The protein belongs to the SAICAR synthetase family.

It carries out the reaction 5-amino-1-(5-phospho-D-ribosyl)imidazole-4-carboxylate + L-aspartate + ATP = (2S)-2-[5-amino-1-(5-phospho-beta-D-ribosyl)imidazole-4-carboxamido]succinate + ADP + phosphate + 2 H(+). It participates in purine metabolism; IMP biosynthesis via de novo pathway; 5-amino-1-(5-phospho-D-ribosyl)imidazole-4-carboxamide from 5-amino-1-(5-phospho-D-ribosyl)imidazole-4-carboxylate: step 1/2. This chain is Phosphoribosylaminoimidazole-succinocarboxamide synthase, found in Clostridium botulinum (strain Langeland / NCTC 10281 / Type F).